A 257-amino-acid chain; its full sequence is UPF0246 protein ACICU_02469 (257 aa).

The protein belongs to the UPF0246 family.

The sequence is that of UPF0246 protein ACICU_02469 from Acinetobacter baumannii (strain ACICU).